We begin with the raw amino-acid sequence, 388 residues long: MKRAILIVLDSVGIGEMPDAHEYGDVGSNTIGNIAKARGGLHLPHLQRLGLGNIAPIQGVDPEASPQGCYGKMAERSPGKDTTTGHWEIAGVVLERAFPTFSKGFPEDFLQAFAERIGRQVIGNEVASGTEIIQRLGQEHVRTGKPIAYTSADSVFQIAAHEEVIPLEELYRICGIAREMLEGDLRVGRVIARPFLGEEGNFYRTTNRHDYAIEPPHKILLDMVKEKGLRVMAVGKIKDIYAGHGVTDHLASKGNRDGVEKTLAFIREKKPGLIMTNLVDFDMLYGHRNDVENYAQALEEFDGRLPEILASLEEEDILFITADHGCDPTTESTDHSREYVPLLVYGKKVVPGRNLGIRSSFADLGATIAEYLGTEELVNGRSFLGELI.

The Mn(2+) site is built by Asp-10, Asp-282, His-287, Asp-323, His-324, and His-335.

It belongs to the phosphopentomutase family. Mn(2+) serves as cofactor.

The protein localises to the cytoplasm. The enzyme catalyses 2-deoxy-alpha-D-ribose 1-phosphate = 2-deoxy-D-ribose 5-phosphate. The catalysed reaction is alpha-D-ribose 1-phosphate = D-ribose 5-phosphate. Its pathway is carbohydrate degradation; 2-deoxy-D-ribose 1-phosphate degradation; D-glyceraldehyde 3-phosphate and acetaldehyde from 2-deoxy-alpha-D-ribose 1-phosphate: step 1/2. Isomerase that catalyzes the conversion of deoxy-ribose 1-phosphate (dRib-1-P) and ribose 1-phosphate (Rib-1-P) to deoxy-ribose 5-phosphate (dRib-5-P) and ribose 5-phosphate (Rib-5-P), respectively. This is Phosphopentomutase from Desulfitobacterium hafniense (strain DSM 10664 / DCB-2).